We begin with the raw amino-acid sequence, 291 residues long: UDP-N-acetylenolpyruvoylglucosamine reductase (291 aa).

An FAD-binding PCMH-type domain is found at 22-187 (RIGGPARYFK…ASATFQLTKD (166 aa)). Arginine 166 is a catalytic residue. The active-site Proton donor is the cysteine 214. Glutamate 283 is an active-site residue.

This sequence belongs to the MurB family. Requires FAD as cofactor.

The protein localises to the cytoplasm. It catalyses the reaction UDP-N-acetyl-alpha-D-muramate + NADP(+) = UDP-N-acetyl-3-O-(1-carboxyvinyl)-alpha-D-glucosamine + NADPH + H(+). It participates in cell wall biogenesis; peptidoglycan biosynthesis. Cell wall formation. The polypeptide is UDP-N-acetylenolpyruvoylglucosamine reductase (Chlamydia trachomatis serovar L2 (strain ATCC VR-902B / DSM 19102 / 434/Bu)).